Here is a 130-residue protein sequence, read N- to C-terminus: MMRQSLQAVLPEISGNKTSPLRKSVCSDLLTLFNSPHSALPSLLVSGMPEWQVHNPSDKHLQSWYCRQLRSALLFHEPRIAALQVNLKEAYCHTLAISLEIMLYHDDESLTFDLVWDNGGWRSATLENVS.

It belongs to the GpW/Gp25 family. IraD subfamily. As to quaternary structure, interacts with RssB.

Its subcellular location is the cytoplasm. Its function is as follows. Inhibits RpoS proteolysis by regulating RssB activity, thereby increasing the stability of the sigma stress factor RpoS during oxidative stress. Its effect on RpoS stability is due to its interaction with RssB, which probably blocks the interaction of RssB with RpoS, and the consequent delivery of the RssB-RpoS complex to the ClpXP protein degradation pathway. In Escherichia coli O139:H28 (strain E24377A / ETEC), this protein is Anti-adapter protein IraD.